The chain runs to 386 residues: Prostatic acid phosphatase (386 aa).

An N-terminal signal peptide occupies residues M1–A32. A substrate-binding site is contributed by R43. H44 functions as the Nucleophile in the catalytic mechanism. R47 contributes to the substrate binding site. A glycan (N-linked (GlcNAc...) asparagine) is linked at N94. R111 serves as a coordination point for substrate. Intrachain disulfides connect C161-C372, C215-C313, and C347-C351. Residue N220 is glycosylated (N-linked (GlcNAc...) asparagine). H289 lines the substrate pocket. D290 serves as the catalytic Proton donor. N-linked (GlcNAc...) asparagine glycosylation occurs at N333.

It belongs to the histidine acid phosphatase family. As to quaternary structure, homodimer; dimer formation is required for phosphatase activity. Post-translationally, N-glycosylated. High mannose content, partially sialylated and fucosylated biantennary complex. Also fucosylated with partially sialylated triantennary complex oligosaccharides. In terms of processing, proteolytically cleaved in seminal fluid to produce several peptides. Peptide PAPf39, the most prominent, forms amyloid beta-sheet fibrils, SEVI (semen-derived enhancer of viral infection). Highly expressed in the prostate, restricted to glandular and ductal epithelial cells. Also expressed in bladder, kidney, pancreas, lung, cervix, testis and ovary. Weak expression in a subset of pancreatic islet cells, squamous epithelia, the pilosebaceous unit, colonic neuroendocrine cells and skin adnexal structures. Low expression in prostate carcinoma cells and tissues. As to expression, widely expressed. Expressed in the sarcolemma of skeletal muscle.

The protein localises to the secreted. It localises to the cell membrane. The protein resides in the lysosome membrane. Its subcellular location is the nucleus. It is found in the cytoplasm. The protein localises to the cytosol. It carries out the reaction a phosphate monoester + H2O = an alcohol + phosphate. The enzyme catalyses 1-(9Z-octadecenoyl)-sn-glycero-3-phosphate + H2O = 1-(9Z-octadecenoyl)-sn-glycerol + phosphate. It catalyses the reaction a ribonucleoside 5'-phosphate + H2O = a ribonucleoside + phosphate. The catalysed reaction is O-phospho-L-tyrosyl-[protein] + H2O = L-tyrosyl-[protein] + phosphate. Phosphatase activity inhibited by L(+)-tartrate, and by its derivative, alpha-benzylaminobenzylphosphonic acid. A non-specific tyrosine phosphatase that dephosphorylates a diverse number of substrates under acidic conditions (pH 4-6) including alkyl, aryl, and acyl orthophosphate monoesters and phosphorylated proteins. Has lipid phosphatase activity and inactivates lysophosphatidic acid in seminal plasma. In terms of biological role, tyrosine phosphatase that acts as a tumor suppressor of prostate cancer through dephosphorylation of ERBB2 and deactivation of MAPK-mediated signaling. In addition to its tyrosine phosphatase activity has ecto-5'-nucleotidase activity in dorsal root ganglion (DRG) neurons. Generates adenosine from AMP which acts as a pain suppressor. Functionally, (Microbial infection) Forms amyloid beta-sheet fibrils in semen. These fibrils, termed SEVI (semen-derived enhancer of viral infection) capture HIV virions, attach them to target cells and enhance infection. SEVI amyloid fibrils are degraded by polyphenol epigallocatechin-3-gallate (EGCG), a constituent of green tea. Target cell attachment and enhancement of HIV infection is inhibited by surfen. Also similarly boosts XMRV (xenotropic murine leukemia virus-related virus) infection. The sequence is that of Prostatic acid phosphatase from Homo sapiens (Human).